A 550-amino-acid chain; its full sequence is CTP synthase (550 aa).

Residues 1–270 are amidoligase domain; it reads MTKFVFVTGG…DRLICEELRL (270 aa). A CTP-binding site is contributed by serine 13. UTP is bound at residue serine 13. Residues 14-19 and aspartate 71 each bind ATP; that span reads SLGKGI. Residues aspartate 71 and glutamate 144 each coordinate Mg(2+). CTP-binding positions include 151–153, 191–196, and lysine 227; these read DIE and KTKPTQ. Residues 191–196 and lysine 227 each bind UTP; that span reads KTKPTQ. Residues 295 to 547 enclose the Glutamine amidotransferase type-1 domain; it reads TIGMVGKYVD…VEAALAGQQR (253 aa). L-glutamine is bound at residue glycine 356. Residue cysteine 383 is the Nucleophile; for glutamine hydrolysis of the active site. Residues 384–387, glutamate 407, and arginine 473 contribute to the L-glutamine site; that span reads LGMQ. Residues histidine 520 and glutamate 522 contribute to the active site.

Belongs to the CTP synthase family. Homotetramer.

The enzyme catalyses UTP + L-glutamine + ATP + H2O = CTP + L-glutamate + ADP + phosphate + 2 H(+). It catalyses the reaction L-glutamine + H2O = L-glutamate + NH4(+). The catalysed reaction is UTP + NH4(+) + ATP = CTP + ADP + phosphate + 2 H(+). The protein operates within pyrimidine metabolism; CTP biosynthesis via de novo pathway; CTP from UDP: step 2/2. With respect to regulation, allosterically activated by GTP, when glutamine is the substrate; GTP has no effect on the reaction when ammonia is the substrate. The allosteric effector GTP functions by stabilizing the protein conformation that binds the tetrahedral intermediate(s) formed during glutamine hydrolysis. Inhibited by the product CTP, via allosteric rather than competitive inhibition. In terms of biological role, catalyzes the ATP-dependent amination of UTP to CTP with either L-glutamine or ammonia as the source of nitrogen. Regulates intracellular CTP levels through interactions with the four ribonucleotide triphosphates. This Cupriavidus pinatubonensis (strain JMP 134 / LMG 1197) (Cupriavidus necator (strain JMP 134)) protein is CTP synthase.